The chain runs to 419 residues: Gamma-glutamyl phosphate reductase (419 aa).

It belongs to the gamma-glutamyl phosphate reductase family.

Its subcellular location is the cytoplasm. It catalyses the reaction L-glutamate 5-semialdehyde + phosphate + NADP(+) = L-glutamyl 5-phosphate + NADPH + H(+). It participates in amino-acid biosynthesis; L-proline biosynthesis; L-glutamate 5-semialdehyde from L-glutamate: step 2/2. Functionally, catalyzes the NADPH-dependent reduction of L-glutamate 5-phosphate into L-glutamate 5-semialdehyde and phosphate. The product spontaneously undergoes cyclization to form 1-pyrroline-5-carboxylate. The sequence is that of Gamma-glutamyl phosphate reductase from Oleidesulfovibrio alaskensis (strain ATCC BAA-1058 / DSM 17464 / G20) (Desulfovibrio alaskensis).